The primary structure comprises 115 residues: T-cell receptor gamma chain V region V108B (115 aa).

Residues Met1–Gly18 form the signal peptide. The v segment stretch occupies residues Gln19–Ile115.

The sequence is that of T-cell receptor gamma chain V region V108B (Tcrg-V1) from Mus musculus (Mouse).